The primary structure comprises 223 residues: MEDVKLQFPSLPLCKEEAEDWTYPMRREMQEILPGLFLGPYSAAMKSKLSVLQKCGITHVICIRQNIEANFIKPNFQQLFRYLVLDIADNPVENIIRFFLTSKEFIDGCLQTGGKVLIHGNAGISRSAALVIAYIMETFGIKYRDAFTYVQERRFCINPNAGFVHQLQEYEAIYLAKLTIKMMSPLQLGRPLCIQSGSTGSLKRTLDDEDELGNMQVSAAHEG.

One can recognise a Tyrosine-protein phosphatase domain in the interval 28–176; the sequence is EMQEILPGLF…LQEYEAIYLA (149 aa).

Belongs to the protein-tyrosine phosphatase family. Non-receptor class subfamily.

Functionally, catalytically inactive phosphatase. The chain is Serine/threonine/tyrosine-interacting protein B (styx-b) from Xenopus laevis (African clawed frog).